A 574-amino-acid chain; its full sequence is Glutamyl-tRNA(Gln) amidotransferase subunit B, mitochondrial (574 aa).

It belongs to the GatB/GatE family. GatB subfamily. In terms of assembly, subunit of the heterotrimeric GatCAB amidotransferase (AdT) complex, composed of A, B and C subunits.

It localises to the mitochondrion. It catalyses the reaction L-glutamyl-tRNA(Gln) + L-glutamine + ATP + H2O = L-glutaminyl-tRNA(Gln) + L-glutamate + ADP + phosphate + H(+). Its function is as follows. Allows the formation of correctly charged Gln-tRNA(Gln) through the transamidation of misacylated Glu-tRNA(Gln) in the mitochondria. The reaction takes place in the presence of glutamine and ATP through an activated gamma-phospho-Glu-tRNA(Gln). In Phytophthora infestans (strain T30-4) (Potato late blight agent), this protein is Glutamyl-tRNA(Gln) amidotransferase subunit B, mitochondrial.